A 411-amino-acid chain; its full sequence is Argininosuccinate lyase (411 aa).

Belongs to the lyase 1 family. Argininosuccinate lyase subfamily.

The protein resides in the cytoplasm. It catalyses the reaction 2-(N(omega)-L-arginino)succinate = fumarate + L-arginine. It functions in the pathway amino-acid biosynthesis; L-arginine biosynthesis; L-arginine from L-ornithine and carbamoyl phosphate: step 3/3. The protein is Argininosuccinate lyase of Legionella pneumophila (strain Lens).